We begin with the raw amino-acid sequence, 479 residues long: PRAME family member 19 (479 aa).

Residues 15–38 (QSLLRDQALAISVLDELPRELFPR) form an LRR 1 repeat. Residues 97–124 (RWKLQVLEMRDVDENFWTIWSGARPLSC) form an LRR 1; degenerate repeat. An LRR 2; degenerate repeat occupies 179–203 (HLCCTKVVNYSMNILNFRNILETVY). The LRR 3; degenerate repeat unit spans residues 204–230 (PDSIQVLEIWNMCWPCMVAEVSRYLSQ). An LRR 4; degenerate repeat occupies 231-265 (MKNLRKLFISDGCGYLPSFESQGQLVAEFSSVFLR). 5 LRR repeats span residues 266–291 (LEYL…IRCL), 292–323 (KSPL…SQLK), 324–342 (QLNL…PLRA), 348–375 (AATL…ALSR), and 376–400 (CSNL…LLRH).

Belongs to the PRAME family.

The protein is PRAME family member 19 of Homo sapiens (Human).